The primary structure comprises 235 residues: MRRGAPQDQELVGPGPPGRGSRGAPPPLGPVVPVLVFPPDLVFRADQRSGPRQLLTLYNPTGTALRFRVLCTAPAKYTVFDAEGYVKPQSCIDIVIRHVAPIPSHYDVQDRFRIELSEEGAEGRVVGRKDITSILRAPAYPLELQGQPDPAPRPGPPAGTPPPTARHFQEHPRQQLATSSFLLFLLTGIVSVAFLLLPLPDELGSQLPQVLHVSLGQKLVAAYVLGLLTMVFLRT.

Disordered stretches follow at residues methionine 1 to proline 25 and glutamate 143 to histidine 171. One can recognise an MSP domain in the interval proline 33–glutamine 145. Positions aspartate 149–threonine 164 are enriched in pro residues. Helical transmembrane passes span serine 180–proline 200 and valine 213–leucine 233.

The protein localises to the membrane. This Homo sapiens (Human) protein is Motile sperm domain-containing protein 3 (MOSPD3).